Consider the following 394-residue polypeptide: Elongation factor Tu (394 aa).

Residues lysine 10–aspartate 204 form the tr-type G domain. The interval glycine 19–threonine 26 is G1. Residue glycine 19–threonine 26 coordinates GTP. Residue threonine 26 participates in Mg(2+) binding. Residues glycine 60–asparagine 64 are G2. Positions aspartate 81–glycine 84 are G3. GTP is bound by residues aspartate 81–histidine 85 and asparagine 136–aspartate 139. The segment at asparagine 136–aspartate 139 is G4. Residues serine 174–leucine 176 form a G5 region.

Belongs to the TRAFAC class translation factor GTPase superfamily. Classic translation factor GTPase family. EF-Tu/EF-1A subfamily. As to quaternary structure, monomer.

It is found in the cytoplasm. It catalyses the reaction GTP + H2O = GDP + phosphate + H(+). GTP hydrolase that promotes the GTP-dependent binding of aminoacyl-tRNA to the A-site of ribosomes during protein biosynthesis. The protein is Elongation factor Tu of Mycoplasmoides gallisepticum (strain R(low / passage 15 / clone 2)) (Mycoplasma gallisepticum).